A 149-amino-acid chain; its full sequence is Large ribosomal subunit protein uL15 (149 aa).

Basic residues-rich tracts occupy residues Met1–His14 and Arg21–Gly30. The interval Met1–His39 is disordered. 2 short sequence motifs (nuclear localization signal) span residues Lys7–Gly13 and Lys24–Gly30. Lys96 is covalently cross-linked (Glycyl lysine isopeptide (Lys-Gly) (interchain with G-Cter in ubiquitin)).

The protein belongs to the universal ribosomal protein uL15 family. Component of the large ribosomal subunit (LSU). Mature yeast ribosomes consist of a small (40S) and a large (60S) subunit. The 40S small subunit contains 1 molecule of ribosomal RNA (18S rRNA) and 33 different proteins (encoded by 57 genes). The large 60S subunit contains 3 rRNA molecules (25S, 5.8S and 5S rRNA) and 46 different proteins (encoded by 81 genes).

Its subcellular location is the cytoplasm. Component of the ribosome, a large ribonucleoprotein complex responsible for the synthesis of proteins in the cell. The small ribosomal subunit (SSU) binds messenger RNAs (mRNAs) and translates the encoded message by selecting cognate aminoacyl-transfer RNA (tRNA) molecules. The large subunit (LSU) contains the ribosomal catalytic site termed the peptidyl transferase center (PTC), which catalyzes the formation of peptide bonds, thereby polymerizing the amino acids delivered by tRNAs into a polypeptide chain. The nascent polypeptides leave the ribosome through a tunnel in the LSU and interact with protein factors that function in enzymatic processing, targeting, and the membrane insertion of nascent chains at the exit of the ribosomal tunnel. The chain is Large ribosomal subunit protein uL15 from Saccharomyces cerevisiae (strain ATCC 204508 / S288c) (Baker's yeast).